A 340-amino-acid chain; its full sequence is Ketol-acid reductoisomerase (NADP(+)) (340 aa).

The KARI N-terminal Rossmann domain occupies 3 to 182 (VQMEYEKDVK…GAARVGLLET (180 aa)). Residues 26 to 29 (YGSQ), R49, S53, and 83 to 86 (DEIQ) contribute to the NADP(+) site. Residue H108 is part of the active site. Position 134 (G134) interacts with NADP(+). Residues 183 to 328 (TYKEETEEDL…AELRKAMPFV (146 aa)) enclose the KARI C-terminal knotted domain. Positions 191, 195, 227, and 231 each coordinate Mg(2+). S252 serves as a coordination point for substrate.

Belongs to the ketol-acid reductoisomerase family. Mg(2+) is required as a cofactor.

The catalysed reaction is (2R)-2,3-dihydroxy-3-methylbutanoate + NADP(+) = (2S)-2-acetolactate + NADPH + H(+). The enzyme catalyses (2R,3R)-2,3-dihydroxy-3-methylpentanoate + NADP(+) = (S)-2-ethyl-2-hydroxy-3-oxobutanoate + NADPH + H(+). Its pathway is amino-acid biosynthesis; L-isoleucine biosynthesis; L-isoleucine from 2-oxobutanoate: step 2/4. It functions in the pathway amino-acid biosynthesis; L-valine biosynthesis; L-valine from pyruvate: step 2/4. In terms of biological role, involved in the biosynthesis of branched-chain amino acids (BCAA). Catalyzes an alkyl-migration followed by a ketol-acid reduction of (S)-2-acetolactate (S2AL) to yield (R)-2,3-dihydroxy-isovalerate. In the isomerase reaction, S2AL is rearranged via a Mg-dependent methyl migration to produce 3-hydroxy-3-methyl-2-ketobutyrate (HMKB). In the reductase reaction, this 2-ketoacid undergoes a metal-dependent reduction by NADPH to yield (R)-2,3-dihydroxy-isovalerate. This Streptococcus thermophilus (strain ATCC BAA-491 / LMD-9) protein is Ketol-acid reductoisomerase (NADP(+)).